The following is a 102-amino-acid chain: Cell division topological specificity factor (102 aa).

This sequence belongs to the MinE family.

In terms of biological role, prevents the cell division inhibition by proteins MinC and MinD at internal division sites while permitting inhibition at polar sites. This ensures cell division at the proper site by restricting the formation of a division septum at the midpoint of the long axis of the cell. The chain is Cell division topological specificity factor from Synechococcus sp. (strain CC9605).